A 129-amino-acid polypeptide reads, in one-letter code: Large ribosomal subunit protein bL17 (129 aa).

Belongs to the bacterial ribosomal protein bL17 family. Part of the 50S ribosomal subunit. Contacts protein L32.

This Acidovorax ebreus (strain TPSY) (Diaphorobacter sp. (strain TPSY)) protein is Large ribosomal subunit protein bL17.